Here is a 171-residue protein sequence, read N- to C-terminus: S-ribosylhomocysteine lyase (171 aa).

Fe cation is bound by residues histidine 54, histidine 58, and cysteine 128.

This sequence belongs to the LuxS family. In terms of assembly, homodimer. It depends on Fe cation as a cofactor.

It carries out the reaction S-(5-deoxy-D-ribos-5-yl)-L-homocysteine = (S)-4,5-dihydroxypentane-2,3-dione + L-homocysteine. Functionally, involved in the synthesis of autoinducer 2 (AI-2) which is secreted by bacteria and is used to communicate both the cell density and the metabolic potential of the environment. The regulation of gene expression in response to changes in cell density is called quorum sensing. Catalyzes the transformation of S-ribosylhomocysteine (RHC) to homocysteine (HC) and 4,5-dihydroxy-2,3-pentadione (DPD). The chain is S-ribosylhomocysteine lyase from Citrobacter koseri (strain ATCC BAA-895 / CDC 4225-83 / SGSC4696).